We begin with the raw amino-acid sequence, 329 residues long: MATPHHSRRGSMAYYPRVRAKRIQGDIRSWPEIEGQTKVQAFAGYKVGMTHIQMVDYRKNSVTAGQVIMAPVTVVEVPPLTVMSIRYYARGDNGLEVISEEWAENIDKDVLRRINKINRHKKGIEVKDVDDVRLMVHTNPQLVSGVPSKTPEIFEIRIGGSTIENRIKYAKERLGSNISFSDFSKPGNFVDVIAVTKGKGFQGVVKRFGVKLLPRKNRKHRRMIGTLGPWHPDWVRNTVPQAGQVGFHQRTIHNIRIIKFDTKDHVDDINVKGGFLNYGIVRNDYVLLFGSVPGPAKRLIKMRDPARQTRPAVESIEVTYVSRESKQGD.

The protein belongs to the universal ribosomal protein uL3 family. As to quaternary structure, part of the 50S ribosomal subunit. Forms a cluster with proteins L14 and L24e.

In terms of biological role, one of the primary rRNA binding proteins, it binds directly near the 3'-end of the 23S rRNA, where it nucleates assembly of the 50S subunit. The protein is Large ribosomal subunit protein uL3 of Picrophilus torridus (strain ATCC 700027 / DSM 9790 / JCM 10055 / NBRC 100828 / KAW 2/3).